Reading from the N-terminus, the 1017-residue chain is Type VI secretion system spike protein VgrG3 (1017 aa).

The active site involves Asp842.

It belongs to the VgrG protein family. In terms of assembly, interacts with TsiV3. Interacts with TseL.

The protein localises to the secreted. Functionally, part of the type VI secretion system specialized secretion system, which delivers several virulence factors in both prokaryotic and eukaryotic cells during infection. Forms the spike at the tip of the elongating tube formed by haemolysin co-regulated protein Hcp. Allows the delivery of the TseL antibacterial toxin to target cells where it exerts its toxicity. Additionally, acts directly as an effector and targets the cell wall peptidoglycan layer of prey cells for degradation via its C-terminus. Toxicity is counteracted by a cognate immunity protein TsiV3. The sequence is that of Type VI secretion system spike protein VgrG3 from Vibrio cholerae serotype O1 (strain ATCC 39315 / El Tor Inaba N16961).